A 425-amino-acid polypeptide reads, in one-letter code: 3-phosphoshikimate 1-carboxyvinyltransferase (425 aa).

3 residues coordinate 3-phosphoshikimate: Lys-23, Ser-24, and Arg-28. Position 23 (Lys-23) interacts with phosphoenolpyruvate. Phosphoenolpyruvate contacts are provided by Gly-96 and Arg-124. 3-phosphoshikimate-binding residues include Thr-170, Ser-171, Gln-172, Ser-198, Asp-314, and Lys-341. Position 172 (Gln-172) interacts with phosphoenolpyruvate. The Proton acceptor role is filled by Asp-314. Residues Arg-345, Arg-386, and Lys-411 each coordinate phosphoenolpyruvate.

The protein belongs to the EPSP synthase family. In terms of assembly, monomer.

Its subcellular location is the cytoplasm. The enzyme catalyses 3-phosphoshikimate + phosphoenolpyruvate = 5-O-(1-carboxyvinyl)-3-phosphoshikimate + phosphate. Its pathway is metabolic intermediate biosynthesis; chorismate biosynthesis; chorismate from D-erythrose 4-phosphate and phosphoenolpyruvate: step 6/7. In terms of biological role, catalyzes the transfer of the enolpyruvyl moiety of phosphoenolpyruvate (PEP) to the 5-hydroxyl of shikimate-3-phosphate (S3P) to produce enolpyruvyl shikimate-3-phosphate and inorganic phosphate. The protein is 3-phosphoshikimate 1-carboxyvinyltransferase of Nostoc sp. (strain PCC 7120 / SAG 25.82 / UTEX 2576).